A 694-amino-acid chain; its full sequence is Lon-like protease BrxL (694 aa).

Belongs to the BrxL family.

BREX systems (bacteriophage exclusion) provide immunity against bacteriophage. Part of a type 1 BREX system which protects against dsDNA phage. This system allows phage adsorption but prevents phage DNA replication, without degradation of the phage DNA. Methylation of bacterial DNA by PglX guides self/non-self discrimination. When the brxA-brxB-brxC-pglX-pglZ-brxL genes are transformed into a susceptible E.coli strain (BW25113) they confer very high resistance to infection by bacteriophage VR7 and VpaE1, about 100-fold protection against lambda, T5 and T7 and no protection against RNA phage Qbeta, ssDNA phage M13 or dSDNA phage T4 and VR5. Glycosylated phage DNA is not susceptible to BREX. The BREX system does not confer resistance to lysogenic lambda phage, i.e. prophage that are integrated into the chromosomal DNA and then induced to form phage. Expression of this protein alone is toxic. This Escherichia coli O9:H4 (strain HS) protein is Lon-like protease BrxL.